A 676-amino-acid chain; its full sequence is DNA ligase (676 aa).

NAD(+)-binding positions include 34–38, 83–84, and E117; these read DQEFD and SL. The N6-AMP-lysine intermediate role is filled by K119. Residues R140, E177, K285, and K309 each contribute to the NAD(+) site. C403, C406, C427, and C434 together coordinate Zn(2+). The BRCT domain occupies 595 to 676; that stretch reads NNNGLLKNKT…EWLKMLNKSG (82 aa).

Belongs to the NAD-dependent DNA ligase family. LigA subfamily. It depends on Mg(2+) as a cofactor. The cofactor is Mn(2+).

It catalyses the reaction NAD(+) + (deoxyribonucleotide)n-3'-hydroxyl + 5'-phospho-(deoxyribonucleotide)m = (deoxyribonucleotide)n+m + AMP + beta-nicotinamide D-nucleotide.. In terms of biological role, DNA ligase that catalyzes the formation of phosphodiester linkages between 5'-phosphoryl and 3'-hydroxyl groups in double-stranded DNA using NAD as a coenzyme and as the energy source for the reaction. It is essential for DNA replication and repair of damaged DNA. The protein is DNA ligase of Pelagibacter ubique (strain HTCC1062).